A 359-amino-acid polypeptide reads, in one-letter code: Nicotinate-nucleotide--dimethylbenzimidazole phosphoribosyltransferase (359 aa).

Catalysis depends on E318, which acts as the Proton acceptor.

It belongs to the CobT family. Homodimer.

The enzyme catalyses 5,6-dimethylbenzimidazole + nicotinate beta-D-ribonucleotide = alpha-ribazole 5'-phosphate + nicotinate + H(+). It participates in nucleoside biosynthesis; alpha-ribazole biosynthesis; alpha-ribazole from 5,6-dimethylbenzimidazole: step 1/2. Catalyzes the synthesis of alpha-ribazole-5'-phosphate from nicotinate mononucleotide (NAMN) and 5,6-dimethylbenzimidazole (DMB). This is Nicotinate-nucleotide--dimethylbenzimidazole phosphoribosyltransferase from Escherichia coli (strain ATCC 8739 / DSM 1576 / NBRC 3972 / NCIMB 8545 / WDCM 00012 / Crooks).